We begin with the raw amino-acid sequence, 296 residues long: MATERNRRRKGSYPQLPPAPDDYPTFPDKSTWPVVFPEIPAGTNGRFARPPQHTSKEAAPQIPADQVPQHVAVVMDGNGRWATQRGLGRTEGHKMGEAVLIDITCGAIEIGIKHLTVYAFSTENWKRSTEEVRFLMGFNREVVRRRRENLNDMGVRMRWVGSRPRMWSSVIKEFDIAEQMTVDNDVITINYCVNYGGRTEIVEAARELAQEAVDGKIKPNRISEAQFAKHLHRSDIPDVDLFIRTSGEQRASNFLLWQAAYAEYVFQDKLWPDYDRRDLWAACEEYVQRNRRFGRA.

The span at 1-11 shows a compositional bias: basic residues; it reads MATERNRRRKG. A disordered region spans residues 1–29; the sequence is MATERNRRRKGSYPQLPPAPDDYPTFPDK. Residue Asp-76 is part of the active site. Asp-76 is a Mg(2+) binding site. Substrate contacts are provided by residues 77 to 80, Trp-81, Arg-89, His-93, and 121 to 123; these read GNGR and STE. The Proton acceptor role is filled by Asn-124. Residues Trp-125, Arg-127, Arg-244, and 250-252 contribute to the substrate site; that span reads RAS. Glu-263 contacts Mg(2+).

It belongs to the UPP synthase family. Homodimer. The cofactor is Mg(2+).

In terms of biological role, catalyzes the condensation of isopentenyl diphosphate (IPP) with allylic pyrophosphates generating different type of terpenoids. In Mycolicibacterium parafortuitum (Mycobacterium parafortuitum), this protein is Isoprenyl transferase.